A 451-amino-acid polypeptide reads, in one-letter code: MKLKLIFSLFLVLVFCSLFVFGDENETEGQESRIDCRLVRCMAANCTEGQVPYKKKGECCESCMLDCSLVDCYTPKCKKGYYLKKPEGQCCQICQRECSAIQCGIPKCAPGYISQVPVGECCPTCVKKPVNPCALVLCPIVDCMIGWVPYKPEGECCTKCKQDCTTVKCAMPVCEDGATPTKNPNECCYKCPPVNCAAVQCLVPKCNANESLYTPPERCCPICRPNPTLDCTNTLCPIVDCMIGWVPYKPEGECCDRCKQDCTLVKCAMPVCEDGSKPIKNPNECCYKCPAVDCSTVRCMRPLCNENEHLYTPPGKCCPICRPNPNCTDAICPACVGHIEPGQCCPTCDTIPVGPDCTTVKCAMPVCEDGAKPTKNPNECCYKCPPVNCAAVQCPVPKCNANESLYTPPERCCPICRPNPDCTGIMCPECVGTKLPGQCCPTCDSIPVEMA.

The first 22 residues, 1–22 (MKLKLIFSLFLVLVFCSLFVFG), serve as a signal peptide directing secretion. N-linked (GlcNAc...) asparagine glycans are attached at residues asparagine 25, asparagine 45, asparagine 209, asparagine 326, and asparagine 402.

Its subcellular location is the secreted. This is an uncharacterized protein from Dictyostelium discoideum (Social amoeba).